The chain runs to 393 residues: NAD(P)H-quinone oxidoreductase subunit H, chloroplastic (393 aa).

This sequence belongs to the complex I 49 kDa subunit family. As to quaternary structure, NDH is composed of at least 16 different subunits, 5 of which are encoded in the nucleus.

Its subcellular location is the plastid. It is found in the chloroplast thylakoid membrane. The catalysed reaction is a plastoquinone + NADH + (n+1) H(+)(in) = a plastoquinol + NAD(+) + n H(+)(out). It catalyses the reaction a plastoquinone + NADPH + (n+1) H(+)(in) = a plastoquinol + NADP(+) + n H(+)(out). In terms of biological role, NDH shuttles electrons from NAD(P)H:plastoquinone, via FMN and iron-sulfur (Fe-S) centers, to quinones in the photosynthetic chain and possibly in a chloroplast respiratory chain. The immediate electron acceptor for the enzyme in this species is believed to be plastoquinone. Couples the redox reaction to proton translocation, and thus conserves the redox energy in a proton gradient. This chain is NAD(P)H-quinone oxidoreductase subunit H, chloroplastic, found in Cicer arietinum (Chickpea).